Consider the following 235-residue polypeptide: Phosphoribosylaminoimidazole-succinocarboxamide synthase (235 aa).

The protein belongs to the SAICAR synthetase family.

It carries out the reaction 5-amino-1-(5-phospho-D-ribosyl)imidazole-4-carboxylate + L-aspartate + ATP = (2S)-2-[5-amino-1-(5-phospho-beta-D-ribosyl)imidazole-4-carboxamido]succinate + ADP + phosphate + 2 H(+). Its pathway is purine metabolism; IMP biosynthesis via de novo pathway; 5-amino-1-(5-phospho-D-ribosyl)imidazole-4-carboxamide from 5-amino-1-(5-phospho-D-ribosyl)imidazole-4-carboxylate: step 1/2. The chain is Phosphoribosylaminoimidazole-succinocarboxamide synthase from Clostridium botulinum (strain Alaska E43 / Type E3).